The following is a 211-amino-acid chain: Protein-L-isoaspartate O-methyltransferase (211 aa).

Ser62 is a catalytic residue.

Belongs to the methyltransferase superfamily. L-isoaspartyl/D-aspartyl protein methyltransferase family.

The protein resides in the cytoplasm. The enzyme catalyses [protein]-L-isoaspartate + S-adenosyl-L-methionine = [protein]-L-isoaspartate alpha-methyl ester + S-adenosyl-L-homocysteine. Functionally, catalyzes the methyl esterification of L-isoaspartyl residues in peptides and proteins that result from spontaneous decomposition of normal L-aspartyl and L-asparaginyl residues. It plays a role in the repair and/or degradation of damaged proteins. The protein is Protein-L-isoaspartate O-methyltransferase of Shewanella denitrificans (strain OS217 / ATCC BAA-1090 / DSM 15013).